The chain runs to 95 residues: UPF0125 protein BUsg_244 (95 aa).

It belongs to the UPF0125 (RnfH) family.

This is UPF0125 protein BUsg_244 from Buchnera aphidicola subsp. Schizaphis graminum (strain Sg).